Consider the following 233-residue polypeptide: Large ribosomal subunit protein uL1 (233 aa).

It belongs to the universal ribosomal protein uL1 family. Part of the 50S ribosomal subunit.

Binds directly to 23S rRNA. The L1 stalk is quite mobile in the ribosome, and is involved in E site tRNA release. Functionally, protein L1 is also a translational repressor protein, it controls the translation of the L11 operon by binding to its mRNA. In Shewanella sediminis (strain HAW-EB3), this protein is Large ribosomal subunit protein uL1.